The primary structure comprises 86 residues: MDIVQQVGLLVVLIIELVIVIVIWVKVYKLCKEDRRQKKIDRLIARIRERAEDSGNESDGDTEELQDLITEGDNLMHIGIRDNRNN.

The Extracellular portion of the chain corresponds to 1 to 8 (MDIVQQVG). The helical transmembrane segment at 9-29 (LLVVLIIELVIVIVIWVKVYK) threads the bilayer. Residues 30–86 (LCKEDRRQKKIDRLIARIRERAEDSGNESDGDTEELQDLITEGDNLMHIGIRDNRNN) are Cytoplasmic-facing. Serine 54 and serine 58 each carry phosphoserine; by host CK2.

It belongs to the HIV-1 VPU protein family. In terms of assembly, homopentamer. Interacts with host CD4 and BRTC; these interactions induce proteasomal degradation of CD4. Interacts with host BST2; this interaction leads to the degradation of host BST2. Interacts with host FBXW11. Interacts with host AP1M1; this interaction plays a role in the mistrafficking and subsequent degradation of host BST2. Interacts with host RANBP2; this interaction allows Vpu to down-regulate host BLM sumoylation. Forms pentamers or hexamers. Interacts with host CD4 and BRTC; these interactions induce proteasomal degradation of CD4. Interacts with host BST2; this interaction leads to the degradation of host BST2. Interacts with host FBXW11. Interacts with host AP1M1; this interaction plays a role in the mistrafficking and subsequent degradation of host BST2. In terms of processing, phosphorylated by host CK2. This phosphorylation is necessary for interaction with human BTRC and degradation of CD4.

It localises to the host membrane. Ion channel activity is inhibited by hexamethylene amiloride in vitro. In terms of biological role, enhances virion budding by targeting host CD4 and Tetherin/BST2 to proteasome degradation. Degradation of CD4 prevents any unwanted premature interactions between viral Env and its host receptor CD4 in the endoplasmic reticulum. Degradation of antiretroviral protein Tetherin/BST2 is important for virion budding, as BST2 tethers new viral particles to the host cell membrane. Mechanistically, Vpu bridges either CD4 or BST2 to BTRC, a substrate recognition subunit of the Skp1/Cullin/F-box protein E3 ubiquitin ligase, induces their ubiquitination and subsequent proteasomal degradation. The alteration of the E3 ligase specificity by Vpu seems to promote the degradation of host IKBKB, leading to NF-kappa-B down-regulation and subsequent apoptosis. Acts as a viroporin that forms an oligomeric ion channel in membranes. Modulates the host DNA repair mechanisms to promote degradation of nuclear viral cDNA in cells that are already productively infected in order to suppress immune sensing and proviral hyper-integration (superinfection). Manipulates PML-NBs and modulates SUMOylation of host BLM protein thereby enhancing its DNA-end processing activity toward viral unintegrated linear DNA. Also inhibits RAD52-mediated homologous repair of viral cDNA, preventing the generation of dead-end circular forms of single copies of the long terminal repeat and permitting sustained nucleolytic attack. The sequence is that of Protein Vpu from Pan troglodytes (Chimpanzee).